Here is a 273-residue protein sequence, read N- to C-terminus: Imidazole glycerol phosphate synthase subunit HisF (273 aa).

Catalysis depends on residues Asp11 and Asp134.

The protein belongs to the HisA/HisF family. As to quaternary structure, heterodimer of HisH and HisF.

It is found in the cytoplasm. The enzyme catalyses 5-[(5-phospho-1-deoxy-D-ribulos-1-ylimino)methylamino]-1-(5-phospho-beta-D-ribosyl)imidazole-4-carboxamide + L-glutamine = D-erythro-1-(imidazol-4-yl)glycerol 3-phosphate + 5-amino-1-(5-phospho-beta-D-ribosyl)imidazole-4-carboxamide + L-glutamate + H(+). Its pathway is amino-acid biosynthesis; L-histidine biosynthesis; L-histidine from 5-phospho-alpha-D-ribose 1-diphosphate: step 5/9. Functionally, IGPS catalyzes the conversion of PRFAR and glutamine to IGP, AICAR and glutamate. The HisF subunit catalyzes the cyclization activity that produces IGP and AICAR from PRFAR using the ammonia provided by the HisH subunit. The protein is Imidazole glycerol phosphate synthase subunit HisF of Methanococcoides burtonii (strain DSM 6242 / NBRC 107633 / OCM 468 / ACE-M).